The primary structure comprises 151 residues: MDKKDYKKFYLIREDVLPESVVKTLKIKEVLKNDPSLSIFEAVKQFDLSRSAFYKYRDTIFPIDEKIESTREFTLILYVNDIVGMLAEVLNTLSNLDLSILTIHQSIPMEGRATITLSLDATSTDLEIDDVMEALRIVDHVSKVELISMTI.

In terms of domain architecture, ACT spans 74–149; that stretch reads TLILYVNDIV…HVSKVELISM (76 aa).

This sequence belongs to the UPF0735 family.

This chain is UPF0735 ACT domain-containing protein SSP1116, found in Staphylococcus saprophyticus subsp. saprophyticus (strain ATCC 15305 / DSM 20229 / NCIMB 8711 / NCTC 7292 / S-41).